We begin with the raw amino-acid sequence, 404 residues long: Advanced glycosylation end product-specific receptor (404 aa).

Positions 1–22 (MAAGTAVGAWVLVLSLWGAVVG) are cleaved as a signal peptide. The region spanning 23–116 (AQNITARIGE…KETKSNYRVR (94 aa)) is the Ig-like V-type domain. Over 23–342 (AQNITARIGE…VGGSGLGTLA (320 aa)) the chain is Extracellular. Asparagine 25 and asparagine 81 each carry an N-linked (GlcNAc...) asparagine glycan. 2 disulfides stabilise this stretch: cysteine 38/cysteine 99 and cysteine 144/cysteine 208. 2 consecutive Ig-like C2-type domains span residues 124–221 (PEIV…RALR) and 227–317 (PRVW…RAVS). The chain crosses the membrane as a helical span at residues 343–363 (LALGILGGLGTAALLIGVILW). Over 364–404 (QRRQRRGEERKAPENQEEEEERAELNQSEEPEAGESSTGGP) the chain is Cytoplasmic. A disordered region spans residues 367 to 404 (QRRGEERKAPENQEEEEERAELNQSEEPEAGESSTGGP). Residues 378–396 (NQEEEEERAELNQSEEPEA) show a composition bias toward acidic residues. Serine 391 carries the phosphoserine; by PKC/PRKCZ and ATM modification.

Constitutive homodimer; disulfide-linked. Forms homooligomers. Interacts with S100A1 and APP. Interacts with S100B, S100A12 and S100A14. Interacts with TIRAP. Interacts with HMGB1. Interacts with LGP2; this interaction plays an important role in AGER-mediated pro-inflammatory responses and cytokine release. Interacts with double-strand break repair protein MRE11 which is a core component of the MRN complex. The interaction enhances MRE11 endonuclease activity and promotes DNA repair. Interacts with the MCM2-7 complex via interaction with complex member MCM2; the interaction is increased following DNA replication stress and stabilizes the MCM2-7 complex at replication forks. Interacts with longistatin, a protein from the saliva of the tick, Haemaphysalis longicornis; the interaction attenuates AGER-mediated production of reactive oxygen species (ROS), activation of NF-kappa-B and expression of adhesion molecules and cytokines in human endothelial cells. Post-translationally, phosphorylated on its cytoplasmic domain by PKCzeta/PRKCZ upon ligand binding. Phosphorylated by ATM following DNA damage. Targeted by the ubiquitin E3 ligase subunit FBXO10 to mediate its ubiquitination and degradation. Endothelial cells. Increased expression in pre-term labor and preeclampsia placentas compared to controls.

Its subcellular location is the cell membrane. The protein resides in the cell projection. The protein localises to the phagocytic cup. It localises to the early endosome. It is found in the nucleus. Its subcellular location is the secreted. Functionally, cell surface pattern recognition receptor that senses endogenous stress signals with a broad ligand repertoire including advanced glycation end products, S100 proteins, high-mobility group box 1 protein/HMGB1, amyloid beta/APP oligomers, nucleic acids, histones, phospholipids and glycosaminoglycans. Advanced glycosylation end products are nonenzymatically glycosylated proteins which accumulate in vascular tissue in aging and at an accelerated rate in diabetes. These ligands accumulate at inflammatory sites during the pathogenesis of various diseases including diabetes, vascular complications, neurodegenerative disorders and cancers, and RAGE transduces their binding into pro-inflammatory responses. Upon ligand binding, uses TIRAP and MYD88 as adapters to transduce the signal ultimately leading to the induction of inflammatory cytokines IL6, IL8 and TNFalpha through activation of NF-kappa-B. Interaction with S100A12 on endothelium, mononuclear phagocytes, and lymphocytes triggers cellular activation, with generation of key pro-inflammatory mediators. Interaction with S100B after myocardial infarction may play a role in myocyte apoptosis by activating ERK1/2 and p53/TP53 signaling. Contributes to the translocation of amyloid-beta peptide (ABPP) across the cell membrane from the extracellular to the intracellular space in cortical neurons. ABPP-initiated RAGE signaling, especially stimulation of p38 mitogen-activated protein kinase (MAPK), has the capacity to drive a transport system delivering ABPP as a complex with RAGE to the intraneuronal space. Participates in endothelial albumin transcytosis together with HMGB1 through the RAGE/SRC/Caveolin-1 pathway, leading to endothelial hyperpermeability. Mediates the loading of HMGB1 in extracellular vesicles (EVs) that shuttle HMGB1 to hepatocytes by transferrin-mediated endocytosis and subsequently promote hepatocyte pyroptosis by activating the NLRP3 inflammasome. Binds to DNA and promotes extracellular hypomethylated DNA (CpG DNA) uptake by cells via the endosomal route to activate inflammatory responses. Mediates phagocytosis by non-professional phagocytes (NPP) and this is enhanced by binding to ligands including RNA, DNA, HMGB1 and histones. Promotes NPP-mediated phagocytosis of Saccharomyces cerevisiae spores by binding to RNA attached to the spore wall. Also promotes NPP-mediated phagocytosis of apoptotic cells. Following DNA damage, recruited to DNA double-strand break sites where it colocalizes with the MRN repair complex via interaction with double-strand break repair protein MRE11. Enhances the endonuclease activity of MRE11, promoting the end resection of damaged DNA. Promotes DNA damage repair in trophoblasts which enhances trophoblast invasion and contributes to placental development and maintenance. Protects cells from DNA replication stress by localizing to damaged replication forks where it stabilizes the MCM2-7 complex and promotes faithful progression of the replication fork. Mediates the production of reactive oxygen species (ROS) in human endothelial cells. The sequence is that of Advanced glycosylation end product-specific receptor (AGER) from Homo sapiens (Human).